Consider the following 97-residue polypeptide: Co-chaperonin GroES (97 aa).

The protein belongs to the GroES chaperonin family. Heptamer of 7 subunits arranged in a ring. Interacts with the chaperonin GroEL.

It localises to the cytoplasm. In terms of biological role, together with the chaperonin GroEL, plays an essential role in assisting protein folding. The GroEL-GroES system forms a nano-cage that allows encapsulation of the non-native substrate proteins and provides a physical environment optimized to promote and accelerate protein folding. GroES binds to the apical surface of the GroEL ring, thereby capping the opening of the GroEL channel. The chain is Co-chaperonin GroES from Yersinia enterocolitica serotype O:8 / biotype 1B (strain NCTC 13174 / 8081).